The chain runs to 396 residues: Chorismate synthase (396 aa).

Positions 40 and 46 each coordinate NADP(+). FMN is bound by residues 134–136, 257–258, G302, 317–321, and R343; these read RSS, QA, and KPIPS.

It belongs to the chorismate synthase family. In terms of assembly, homotetramer. FMNH2 is required as a cofactor.

It catalyses the reaction 5-O-(1-carboxyvinyl)-3-phosphoshikimate = chorismate + phosphate. It participates in metabolic intermediate biosynthesis; chorismate biosynthesis; chorismate from D-erythrose 4-phosphate and phosphoenolpyruvate: step 7/7. Its function is as follows. Catalyzes the anti-1,4-elimination of the C-3 phosphate and the C-6 proR hydrogen from 5-enolpyruvylshikimate-3-phosphate (EPSP) to yield chorismate, which is the branch point compound that serves as the starting substrate for the three terminal pathways of aromatic amino acid biosynthesis. This reaction introduces a second double bond into the aromatic ring system. The polypeptide is Chorismate synthase (Bifidobacterium animalis subsp. lactis (strain AD011)).